The chain runs to 64 residues: SPbeta prophage-derived uncharacterized protein YoqI (64 aa).

The chain is SPbeta prophage-derived uncharacterized protein YoqI (yoqI) from Bacillus subtilis (strain 168).